We begin with the raw amino-acid sequence, 939 residues long: U3 small nucleolar RNA-associated protein 21 (939 aa).

Serine 2 carries the post-translational modification N-acetylserine. WD repeat units follow at residues 40–71 (ATGTLGSTFYIVTCVGKTFQIYDANTLHLLFV), 81–111 (VALSAHFHYVYAAYENKVGIYKRGIEEHLLE), 119–158 (EHLCIFGDYLCASTDDNSIFIYKKSDPQDKYPSEFYTKLT), 168–201 (VSLQHLATYLNKLTVVTKSNVLLFNVRTGKLVFT), 208–245 (QITTAEPAPVLDIIALGTVTGEVIMFNMRKGKRIRTIK), 252–287 (SSLSFRTDGSSHLSVGTSSGDLIFYDLDRRSRIHVL), 295–347 (YGGV…RSRG), 354–388 (SYIAFADSQSHFMLSASKDRSLWSFSLRKDAQSQE), 415–454 (VALAIENARIGEWENIITAHKDEKFARTWDMRNKRVGRWT), 463–497 (VKSVAMSQCGNFGFIGSSNGSITIYNMQSGILRKK), 505–541 (VTGISLDGMNRKMVSCGLDGIVGFYDFNKSTLLGKLK), 546–581 (ITAMVYHRSSDLFALALDDLSIVVIDAVTQRVVRQL), 583–624 (GHSN…DGII), and 626–664 (DNVATNVKFSPNGDLLATTHVTGNGICIWTNRAQFKTVS). Serine 772 carries the phosphoserine modification.

As to quaternary structure, interacts with snoRNA U3. Interacts with MPP10. Interacts (via WD repeats) with UTP18. Component of the ribosomal small subunit (SSU) processome composed of at least 40 protein subunits and snoRNA U3.

The protein resides in the nucleus. It is found in the nucleolus. Involved in nucleolar processing of pre-18S ribosomal RNA and ribosome assembly. The sequence is that of U3 small nucleolar RNA-associated protein 21 (UTP21) from Saccharomyces cerevisiae (strain ATCC 204508 / S288c) (Baker's yeast).